Here is a 97-residue protein sequence, read N- to C-terminus: Co-chaperonin GroES (97 aa).

Belongs to the GroES chaperonin family. In terms of assembly, heptamer of 7 subunits arranged in a ring. Interacts with the chaperonin GroEL.

The protein localises to the cytoplasm. Functionally, together with the chaperonin GroEL, plays an essential role in assisting protein folding. The GroEL-GroES system forms a nano-cage that allows encapsulation of the non-native substrate proteins and provides a physical environment optimized to promote and accelerate protein folding. GroES binds to the apical surface of the GroEL ring, thereby capping the opening of the GroEL channel. The polypeptide is Co-chaperonin GroES (Buchnera aphidicola subsp. Cinara cedri (strain Cc)).